We begin with the raw amino-acid sequence, 360 residues long: Aminomethyltransferase (360 aa).

It belongs to the GcvT family. The glycine cleavage system is composed of four proteins: P, T, L and H.

It catalyses the reaction N(6)-[(R)-S(8)-aminomethyldihydrolipoyl]-L-lysyl-[protein] + (6S)-5,6,7,8-tetrahydrofolate = N(6)-[(R)-dihydrolipoyl]-L-lysyl-[protein] + (6R)-5,10-methylene-5,6,7,8-tetrahydrofolate + NH4(+). Its function is as follows. The glycine cleavage system catalyzes the degradation of glycine. The polypeptide is Aminomethyltransferase (Flavobacterium psychrophilum (strain ATCC 49511 / DSM 21280 / CIP 103535 / JIP02/86)).